The sequence spans 459 residues: Mitochondrial distribution and morphology protein 34 (459 aa).

Residues methionine 1–glutamine 190 form the SMP-LTD domain. Positions arginine 338–lysine 347 are enriched in basic and acidic residues. Residues arginine 338–serine 375 form a disordered region. Positions proline 348 to arginine 359 are enriched in basic residues.

It belongs to the MDM34 family. In terms of assembly, component of the ER-mitochondria encounter structure (ERMES) or MDM complex, composed of MMM1, MDM10, MDM12 and MDM34. Post-translationally, ubiquitinated by a SCF (SKP1-CUL1-F-box protein) E3 ubiquitin-protein ligase complex containing the F-box protein MDM30. Ubiquitination is important for mitochondrial integrity.

The protein resides in the mitochondrion outer membrane. Its function is as follows. Component of the ERMES/MDM complex, which serves as a molecular tether to connect the endoplasmic reticulum (ER) and mitochondria. Components of this complex are involved in the control of mitochondrial shape and protein biogenesis, and function in nonvesicular lipid trafficking between the ER and mitochondria. MDM34 is required for the interaction of the ER-resident membrane protein MMM1 and the outer mitochondrial membrane-resident beta-barrel protein MDM10. In Saccharomyces cerevisiae (strain YJM789) (Baker's yeast), this protein is Mitochondrial distribution and morphology protein 34.